The primary structure comprises 134 residues: Small ribosomal subunit protein uS9 (134 aa).

The disordered stretch occupies residues 109–134; the sequence is DARRTEPHKPSKSSKGPRAKRQKSYR. Residues 118–134 are compositionally biased toward basic residues; that stretch reads PSKSSKGPRAKRQKSYR.

The protein belongs to the universal ribosomal protein uS9 family.

The sequence is that of Small ribosomal subunit protein uS9 from Methanococcus maripaludis (strain C5 / ATCC BAA-1333).